A 604-amino-acid chain; its full sequence is uncharacterized protein (604 aa).

Residues 239–259 (ELNSPQELNDPQELNNSQDLN) form a disordered region.

This is an uncharacterized protein from Escherichia coli (strain K12).